The primary structure comprises 166 residues: Outer membrane protein assembly factor BamE (166 aa).

Positions M1 to A18 are cleaved as a signal peptide. C19 is lipidated: N-palmitoyl cysteine. C19 is lipidated: S-diacylglycerol cysteine. Positions L143–E166 are disordered.

Belongs to the BamE family. In terms of assembly, part of the Bam complex.

It is found in the cell outer membrane. Part of the outer membrane protein assembly complex, which is involved in assembly and insertion of beta-barrel proteins into the outer membrane. The polypeptide is Outer membrane protein assembly factor BamE (Methylomonas methanica (strain DSM 25384 / MC09)).